Here is an 879-residue protein sequence, read N- to C-terminus: Phosphoenolpyruvate carboxylase (879 aa).

Residues histidine 138 and lysine 545 contribute to the active site.

Belongs to the PEPCase type 1 family. The cofactor is Mg(2+).

The catalysed reaction is oxaloacetate + phosphate = phosphoenolpyruvate + hydrogencarbonate. Its function is as follows. Forms oxaloacetate, a four-carbon dicarboxylic acid source for the tricarboxylic acid cycle. This Haemophilus influenzae (strain PittEE) protein is Phosphoenolpyruvate carboxylase.